We begin with the raw amino-acid sequence, 1314 residues long: Angiotensin-converting enzyme (1314 aa).

The first 35 residues, 1–35 (MGAASGQRGQGPPSPLLLLWLSLLLLLLPPSPAPA), serve as a signal peptide directing secretion. The Extracellular segment spans residues 36–1265 (LDPGLQPGNF…LEPQQARVGQ (1230 aa)). Asparagine 44, asparagine 60, asparagine 80, asparagine 117, and asparagine 166 each carry an N-linked (GlcNAc...) asparagine glycan. 2 Peptidase M2 domains span residues 46-630 (SADE…LGWP) and 649-1228 (VTDE…LGWP). A disulfide bridge connects residues cysteine 163 and cysteine 171. Residue tyrosine 237 participates in chloride binding. A glycan (N-linked (GlcNAc...) asparagine) is linked at asparagine 324. Residues cysteine 365 and cysteine 383 are joined by a disulfide bond. Histidine 396 contributes to the Zn(2+) binding site. Residue glutamate 397 is the Proton acceptor 1 of the active site. Histidine 400 and glutamate 424 together coordinate Zn(2+). An N-linked (GlcNAc...) asparagine glycan is attached at asparagine 515. Histidine 526 (proton donor 1) is an active-site residue. Arginine 535 is a chloride binding site. Cysteine 551 and cysteine 563 are joined by a disulfide. N-linked (GlcNAc...) asparagine glycans are attached at residues asparagine 683, asparagine 701, asparagine 720, and asparagine 766. A disulfide bond links cysteine 763 and cysteine 769. Chloride is bound by residues arginine 797 and tyrosine 835. Asparagine 948 carries an N-linked (GlcNAc...) asparagine glycan. Residues cysteine 963 and cysteine 981 are joined by a disulfide bond. Histidine 994 is a binding site for Zn(2+). Glutamate 995 serves as the catalytic Proton acceptor 2. Zn(2+)-binding residues include histidine 998 and glutamate 1022. 2 residues coordinate chloride: tryptophan 1096 and arginine 1100. The active-site Proton donor 2 is the histidine 1124. Arginine 1133 contacts chloride. A disulfide bridge connects residues cysteine 1149 and cysteine 1161. Residue asparagine 1197 is glycosylated (N-linked (GlcNAc...) asparagine). The juxtamembrane stalk stretch occupies residues 1221 to 1262 (HGETLGWPEYNWTPNTARSEGPFPESGRVNFLGMYLEPQQAR). A helical membrane pass occupies residues 1266 to 1282 (WVLLFLGVSLLVATLGL). Over 1283-1314 (THRLFSIRQHGHSLHRPHRGPQFGSEVELRHS) the chain is Cytoplasmic. Residues 1293–1314 (GHSLHRPHRGPQFGSEVELRHS) are disordered. Serine 1307 is subject to Phosphoserine.

Belongs to the peptidase M2 family. Monomer and homodimer; homodimerizes following binding to an inhibitor. Interacts with calmodulin (CALM1, CALM2 or CALM3); interaction takes place in the cytoplasmic region and regulates phosphorylation and proteolytic cleavage. The cofactor is Zn(2+). It depends on chloride as a cofactor. Post-translationally, produced following proteolytic cleavage by secretase enzymes that cleave the transmembrane form in the juxtamembrane stalk region upstream of the transmembrane region. Cleavage can take place at different sites of the juxtamembrane stalk region. Phosphorylated by CK2 on Ser-1307; which allows membrane retention. Phosphorylated on tyrosine residues on its extracellular part, promoting cleavage by secretase enzymes and formation of the soluble form (Angiotensin-converting enzyme, soluble form). Widely expressed with dominant expression in lung and kidney.

It is found in the cell membrane. The protein localises to the cytoplasm. Its subcellular location is the secreted. It catalyses the reaction Release of a C-terminal dipeptide, oligopeptide-|-Xaa-Yaa, when Xaa is not Pro, and Yaa is neither Asp nor Glu. Thus, conversion of angiotensin I to angiotensin II, with increase in vasoconstrictor activity, but no action on angiotensin II.. The enzyme catalyses angiotensin I + H2O = L-histidyl-L-leucine + angiotensin II. The catalysed reaction is bradykinin + H2O = L-Phe-L-Arg + bradykinin(1-7). It carries out the reaction substance P + H2O = substance P(1-9) + L-Leu-L-Met-NH2. It catalyses the reaction substance P + H2O = substance P(1-8) + Gly-L-Leu-L-Met-NH2. The enzyme catalyses substance P + H2O = L-Phe-L-Phe-Gly-L-Leu-L-Met-NH2 + substance P(1-6). The catalysed reaction is neurotensin + H2O = neurotensin(1-11) + L-isoleucyl-L-leucine. It carries out the reaction goralatide + H2O = N-acetyl-L-seryl-L-aspartate + L-lysyl-L-proline. It catalyses the reaction Met-enkephalin + H2O = L-phenylalanyl-L-methionine + L-tyrosylglycylglycine. The enzyme catalyses Leu-enkephalin + H2O = L-tyrosylglycylglycine + L-phenylalanyl-L-leucine. The catalysed reaction is Met-enkephalin-Arg-Phe + H2O = L-arginyl-L-phenylalanine + Met-enkephalin. With respect to regulation, the dipeptidyl carboxypeptidase activity is strongly activated by chloride. The dipeptidyl carboxypeptidase activity is specifically inhibited by lisinopril, captopril and enalaprilat. Its activity is regulated as follows. Strongly inhibited by lisinopril and captopril. Dipeptidyl carboxypeptidase that removes dipeptides from the C-terminus of a variety of circulating hormones, such as angiotensin I, bradykinin or enkephalins, thereby playing a key role in the regulation of blood pressure, electrolyte homeostasis or synaptic plasticity. Composed of two similar catalytic domains, each possessing a functional active site, with different selectivity for substrates. Plays a major role in the angiotensin-renin system that regulates blood pressure and sodium retention by the kidney by converting angiotensin I to angiotensin II, resulting in an increase of the vasoconstrictor activity of angiotensin. Also able to inactivate bradykinin, a potent vasodilator, and therefore enhance the blood pressure response. Acts as a regulator of synaptic transmission by mediating cleavage of neuropeptide hormones, such as substance P, neurotensin or enkephalins. Catalyzes degradation of different enkephalin neuropeptides (Met-enkephalin, Leu-enkephalin, Met-enkephalin-Arg-Phe and possibly Met-enkephalin-Arg-Gly-Leu). Acts as a regulator of synaptic plasticity in the nucleus accumbens of the brain by mediating cleavage of Met-enkephalin-Arg-Phe, a strong ligand of Mu-type opioid receptor OPRM1, into Met-enkephalin. Met-enkephalin-Arg-Phe cleavage by ACE decreases activation of OPRM1, leading to long-term synaptic potentiation of glutamate release. Also acts as a regulator of hematopoietic stem cell differentiation by mediating degradation of hemoregulatory peptide N-acetyl-SDKP (AcSDKP). Acts as a regulator of cannabinoid signaling pathway by mediating degradation of hemopressin, an antagonist peptide of the cannabinoid receptor CNR1. Involved in amyloid-beta metabolism by catalyzing degradation of Amyloid-beta protein 40 and Amyloid-beta protein 42 peptides, thereby preventing plaque formation. Catalyzes cleavage of cholecystokinin (maturation of Cholecystokinin-8 and Cholecystokinin-5) and Gonadoliberin-1 (both maturation and degradation) hormones. Degradation of hemoregulatory peptide N-acetyl-SDKP (AcSDKP) and amyloid-beta proteins is mediated by the N-terminal catalytic domain, while angiotensin I and cholecystokinin cleavage is mediated by the C-terminal catalytic region. Functionally, soluble form that is released in blood plasma and other body fluids following proteolytic cleavage in the juxtamembrane stalk region. Its function is as follows. Isoform produced by alternative promoter usage that is specifically expressed in spermatocytes and adult testis, and which is required for male fertility. In contrast to somatic isoforms, only contains one catalytic domain. Acts as a dipeptidyl carboxypeptidase that removes dipeptides from the C-terminus of substrates. The identity of substrates that are needed for male fertility is unknown. May also have a glycosidase activity which releases GPI-anchored proteins from the membrane by cleaving the mannose linkage in the GPI moiety. The GPIase activity was reported to be essential for the egg-binding ability of the sperm. This activity is however unclear and has been challenged by other groups, suggesting that it may be indirect. This Mesocricetus auratus (Golden hamster) protein is Angiotensin-converting enzyme.